We begin with the raw amino-acid sequence, 606 residues long: (R)-limonene synthase 1, chloroplastic (606 aa).

The N-terminal 32 residues, 1–32 (MSSCINPSTLVTSVNAFKCLPLATNKAAIRIM), are a transit peptide targeting the chloroplast. 2 residues coordinate Mn(2+): aspartate 342 and aspartate 346. Substrate contacts are provided by aspartate 342, aspartate 346, arginine 484, aspartate 487, and lysine 503. Residues 342-346 (DDIYD) carry the DDXXD motif motif. Aspartate 487 lines the Mn(2+) pocket.

It belongs to the terpene synthase family. It depends on Mg(2+) as a cofactor. Mn(2+) serves as cofactor.

Its subcellular location is the plastid. It is found in the chloroplast. The catalysed reaction is (2E)-geranyl diphosphate = (4R)-limonene + diphosphate. This chain is (R)-limonene synthase 1, chloroplastic, found in Citrus limon (Lemon).